The primary structure comprises 200 residues: ATP synthase subunit b 2 (200 aa).

Residues 1–16 (MAEQNILTTPSPNADT) show a composition bias toward polar residues. A disordered region spans residues 1–38 (MAEQNILTTPSPNADTTIVPPGSPHTHTEQPSGGHGGA). The chain crosses the membrane as a helical span at residues 46-66 (TFLAQLIWLALAFGLLYYLMS).

The protein belongs to the ATPase B chain family. As to quaternary structure, F-type ATPases have 2 components, F(1) - the catalytic core - and F(0) - the membrane proton channel. F(1) has five subunits: alpha(3), beta(3), gamma(1), delta(1), epsilon(1). F(0) has three main subunits: a(1), b(2) and c(10-14). The alpha and beta chains form an alternating ring which encloses part of the gamma chain. F(1) is attached to F(0) by a central stalk formed by the gamma and epsilon chains, while a peripheral stalk is formed by the delta and b chains.

It localises to the cell inner membrane. Functionally, f(1)F(0) ATP synthase produces ATP from ADP in the presence of a proton or sodium gradient. F-type ATPases consist of two structural domains, F(1) containing the extramembraneous catalytic core and F(0) containing the membrane proton channel, linked together by a central stalk and a peripheral stalk. During catalysis, ATP synthesis in the catalytic domain of F(1) is coupled via a rotary mechanism of the central stalk subunits to proton translocation. Its function is as follows. Component of the F(0) channel, it forms part of the peripheral stalk, linking F(1) to F(0). The b'-subunit is a diverged and duplicated form of b found in plants and photosynthetic bacteria. This is ATP synthase subunit b 2 (atpF2) from Methylorubrum populi (strain ATCC BAA-705 / NCIMB 13946 / BJ001) (Methylobacterium populi).